A 358-amino-acid chain; its full sequence is Transcription factor PCF6 (358 aa).

A disordered region spans residues Met1–Met29. Residues Asp7–Gly16 show a composition bias toward gly residues. In terms of domain architecture, TCP spans Gly52–Leu110. Disordered regions lie at residues Ala127–Val163 and Ala282–Gln308. Composition is skewed to polar residues over residues Leu143–Ser156 and Gly285–Ser296.

Forms homodimers and heterodimers.

It localises to the nucleus. In terms of biological role, transcription activator. Binds the promoter core sequence 5'-GGNCC-3'. The sequence is that of Transcription factor PCF6 (PCF6) from Oryza sativa subsp. indica (Rice).